The primary structure comprises 425 residues: Glucose-1-phosphate adenylyltransferase (425 aa).

Alpha-D-glucose 1-phosphate is bound by residues tyrosine 114, glycine 179, 194–195 (EK), and serine 212.

This sequence belongs to the bacterial/plant glucose-1-phosphate adenylyltransferase family. As to quaternary structure, homotetramer.

The enzyme catalyses alpha-D-glucose 1-phosphate + ATP + H(+) = ADP-alpha-D-glucose + diphosphate. It participates in glycan biosynthesis; glycogen biosynthesis. Its function is as follows. Involved in the biosynthesis of ADP-glucose, a building block required for the elongation reactions to produce glycogen. Catalyzes the reaction between ATP and alpha-D-glucose 1-phosphate (G1P) to produce pyrophosphate and ADP-Glc. The sequence is that of Glucose-1-phosphate adenylyltransferase from Pectobacterium carotovorum subsp. carotovorum (strain PC1).